Consider the following 368-residue polypeptide: Probable auxin efflux carrier component 5b (368 aa).

10 helical membrane passes run Val7–Ser27, Cys39–Ala59, Val71–Ala91, Cys114–Leu134, Leu145–Phe165, Val227–Ile247, Val251–Ala271, Leu286–Leu306, Leu312–Ala332, and Ile347–Ile367.

This sequence belongs to the auxin efflux carrier (TC 2.A.69.1) family. In terms of tissue distribution, expressed at low levels in roots and shoot apex.

It localises to the membrane. Its function is as follows. May act as a component of the auxin efflux carrier. In Oryza sativa subsp. japonica (Rice), this protein is Probable auxin efflux carrier component 5b.